The primary structure comprises 167 residues: Leptin (167 aa).

Residues 1 to 21 (MRCGPLCRFLWLWPYLSCVEA) form the signal peptide. The cysteines at positions 117 and 167 are disulfide-linked.

The protein belongs to the leptin family.

It is found in the secreted. Key player in the regulation of energy balance and body weight control. Once released into the circulation, has central and peripheral effects by binding LEPR, found in many tissues, which results in the activation of several major signaling pathways. In the hypothalamus, acts as an appetite-regulating factor that induces a decrease in food intake and an increase in energy consumption by inducing anorexinogenic factors and suppressing orexigenic neuropeptides, also regulates bone mass and secretion of hypothalamo-pituitary-adrenal hormones. In the periphery, increases basal metabolism, influences reproductive function, regulates pancreatic beta-cell function and insulin secretion, is pro-angiogenic for endothelial cell and affects innate and adaptive immunity. In the arcuate nucleus of the hypothalamus, activates by depolarization POMC neurons inducing FOS and SOCS3 expression to release anorexigenic peptides and inhibits by hyperpolarization NPY neurons inducing SOCS3 with a consequent reduction on release of orexigenic peptides. In addition to its known satiety inducing effect, has a modulatory role in nutrient absorption. In the intestine, reduces glucose absorption by enterocytes by activating PKC and leading to a sequential activation of p38, PI3K and ERK signaling pathways which exerts an inhibitory effect on glucose absorption. Acts as a growth factor on certain tissues, through the activation of different signaling pathways increases expression of genes involved in cell cycle regulation such as CCND1, via JAK2-STAT3 pathway, or VEGFA, via MAPK1/3 and PI3K-AKT1 pathways. May also play an apoptotic role via JAK2-STAT3 pathway and up-regulation of BIRC5 expression. Pro-angiogenic, has mitogenic activity on vascular endothelial cells and plays a role in matrix remodeling by regulating the expression of matrix metalloproteinases (MMPs) and tissue inhibitors of metalloproteinases (TIMPs). In innate immunity, modulates the activity and function of neutrophils by increasing chemotaxis and the secretion of oxygen radicals. Increases phagocytosis by macrophages and enhances secretion of pro-inflammatory mediators. Increases cytotoxic ability of NK cells. Plays a pro-inflammatory role, in synergy with IL1B, by inducing NOS2 which promotes the production of IL6, IL8 and Prostaglandin E2, through a signaling pathway that involves JAK2, PI3K, MAP2K1/MEK1 and MAPK14/p38. In adaptive immunity, promotes the switch of memory T-cells towards T helper-1 cell immune responses. Increases CD4(+)CD25(-) T-cell proliferation and reduces autophagy during TCR (T-cell receptor) stimulation, through MTOR signaling pathway activation and BCL2 up-regulation. In Canis lupus familiaris (Dog), this protein is Leptin (LEP).